The following is a 500-amino-acid chain: Pyoverdin chromophore biosynthetic protein PvcC (500 aa).

It depends on FAD as a cofactor.

Its pathway is siderophore biosynthesis; pyoverdin biosynthesis. The polypeptide is Pyoverdin chromophore biosynthetic protein PvcC (pvcC) (Pseudomonas aeruginosa (strain ATCC 15692 / DSM 22644 / CIP 104116 / JCM 14847 / LMG 12228 / 1C / PRS 101 / PAO1)).